We begin with the raw amino-acid sequence, 482 residues long: tRNA sulfurtransferase (482 aa).

Residues 61–165 (LAIRDALTRI…DDRLLLIKGR (105 aa)) enclose the THUMP domain. ATP-binding positions include 183–184 (LI), Lys265, Gly287, and Gln296. Cys344 and Cys456 are joined by a disulfide. In terms of domain architecture, Rhodanese spans 404 to 482 (FGPNDVILDI…GFNNVKVYRP (79 aa)). The active-site Cysteine persulfide intermediate is Cys456.

It belongs to the ThiI family.

The protein localises to the cytoplasm. It catalyses the reaction [ThiI sulfur-carrier protein]-S-sulfanyl-L-cysteine + a uridine in tRNA + 2 reduced [2Fe-2S]-[ferredoxin] + ATP + H(+) = [ThiI sulfur-carrier protein]-L-cysteine + a 4-thiouridine in tRNA + 2 oxidized [2Fe-2S]-[ferredoxin] + AMP + diphosphate. The catalysed reaction is [ThiS sulfur-carrier protein]-C-terminal Gly-Gly-AMP + S-sulfanyl-L-cysteinyl-[cysteine desulfurase] + AH2 = [ThiS sulfur-carrier protein]-C-terminal-Gly-aminoethanethioate + L-cysteinyl-[cysteine desulfurase] + A + AMP + 2 H(+). It functions in the pathway cofactor biosynthesis; thiamine diphosphate biosynthesis. Its function is as follows. Catalyzes the ATP-dependent transfer of a sulfur to tRNA to produce 4-thiouridine in position 8 of tRNAs, which functions as a near-UV photosensor. Also catalyzes the transfer of sulfur to the sulfur carrier protein ThiS, forming ThiS-thiocarboxylate. This is a step in the synthesis of thiazole, in the thiamine biosynthesis pathway. The sulfur is donated as persulfide by IscS. This is tRNA sulfurtransferase from Escherichia coli O45:K1 (strain S88 / ExPEC).